A 149-amino-acid chain; its full sequence is MKPRHKKMAVIALSVSALTVAVVLVLNAFQSNLVFFFSPSQVAAKEAPIGKSFRIGGLVEEGSLKREGDGTTLNFAITDTAEVIRVVYTGILPDLFKEGKGVVAQGKMADDGIFYADEVLAKHDENYMPPEAASALEQAAKAQKTSLAQ.

Residues 1 to 7 (MKPRHKK) are Cytoplasmic-facing. The helical; Signal-anchor for type II membrane protein transmembrane segment at 8–28 (MAVIALSVSALTVAVVLVLNA) threads the bilayer. At 29-149 (FQSNLVFFFS…AKAQKTSLAQ (121 aa)) the chain is on the periplasmic side. Residues histidine 123 and tyrosine 127 each coordinate heme.

This sequence belongs to the CcmE/CycJ family.

The protein localises to the cell inner membrane. Its function is as follows. Heme chaperone required for the biogenesis of c-type cytochromes. Transiently binds heme delivered by CcmC and transfers the heme to apo-cytochromes in a process facilitated by CcmF and CcmH. This Nitrosomonas europaea (strain ATCC 19718 / CIP 103999 / KCTC 2705 / NBRC 14298) protein is Cytochrome c-type biogenesis protein CcmE.